The chain runs to 478 residues: Transcriptional regulator Erg (478 aa).

The segment covering 34-47 (TASSSSEYGQTSKM) has biased composition (polar residues). Disordered regions lie at residues 34–56 (TASS…QQDW) and 73–93 (NQVN…GGKM). Residues 113–199 (IPPPNMTTNE…SHLHYLRETP (87 aa)) enclose the PNT domain. The segment at 242 to 303 (QRITTRPDLP…ILGPTSSRLA (62 aa)) is disordered. Residues 259–280 (AWTSHSHPTQSKATQPSSSTVP) show a composition bias toward polar residues. A DNA-binding region (ETS) is located at residues 310-390 (IQLWQFLLEL…HGKRYAYKFD (81 aa)).

Belongs to the ETS family. Expressed in mesoderm- and, to a lesser extent, in ectoderm-derived tissues.

The protein resides in the nucleus. Its function is as follows. Acts as a transcriptional activator. This chain is Transcriptional regulator Erg (ERG), found in Gallus gallus (Chicken).